The primary structure comprises 328 residues: 5,10-methylenetetrahydromethanopterin reductase (328 aa).

This sequence belongs to the mer family.

Its subcellular location is the cytoplasm. The enzyme catalyses 5-methyl-5,6,7,8-tetrahydromethanopterin + oxidized coenzyme F420-(gamma-L-Glu)(n) + H(+) = 5,10-methylenetetrahydromethanopterin + reduced coenzyme F420-(gamma-L-Glu)(n). It functions in the pathway one-carbon metabolism; methanogenesis from CO(2); methyl-coenzyme M from 5,10-methylene-5,6,7,8-tetrahydromethanopterin: step 1/2. Its function is as follows. Catalyzes the reversible reduction of methylene-H(4)MPT to methyl-H(4)MPT. This is 5,10-methylenetetrahydromethanopterin reductase from Methanosarcina barkeri (strain Fusaro / DSM 804).